We begin with the raw amino-acid sequence, 109 residues long: DNA-binding protein Mpal_0536 (109 aa).

The tract at residues 14 to 35 is disordered; sequence MAQLQSQQMDQQQMDEEKQRAK. Low complexity predominate over residues 16 to 25; it reads QLQSQQMDQQ.

The protein belongs to the PDCD5 family.

The polypeptide is DNA-binding protein Mpal_0536 (Methanosphaerula palustris (strain ATCC BAA-1556 / DSM 19958 / E1-9c)).